A 183-amino-acid chain; its full sequence is Large ribosomal subunit protein uL5 (183 aa).

This sequence belongs to the universal ribosomal protein uL5 family. As to quaternary structure, part of the 50S ribosomal subunit; contacts the 5S rRNA and probably tRNA. Forms a bridge to the 30S subunit in the 70S ribosome.

This is one of the proteins that bind and probably mediate the attachment of the 5S RNA into the large ribosomal subunit, where it forms part of the central protuberance. In the 70S ribosome it contacts protein S13 of the 30S subunit (bridge B1b), connecting the 2 subunits; this bridge is implicated in subunit movement. May contact the P site tRNA; the 5S rRNA and some of its associated proteins might help stabilize positioning of ribosome-bound tRNAs. The polypeptide is Large ribosomal subunit protein uL5 (Thermococcus kodakarensis (strain ATCC BAA-918 / JCM 12380 / KOD1) (Pyrococcus kodakaraensis (strain KOD1))).